The chain runs to 384 residues: UPF0496 protein At3g28310/At3g28320 (384 aa).

A coiled-coil region spans residues 184-215 (QESLFDRVTETKERIAKEIEEVQKRISNVNTA). A run of 2 helical transmembrane segments spans residues 217 to 237 (IVSHVVFGAAAFGYAAGCIAL) and 242 to 262 (VGAPLGAGMVTLLPVIVVQWV). The stretch at 264–361 (VNYVLNNSLE…TTKITEVCET (98 aa)) forms a coiled coil.

It belongs to the UPF0496 family.

It localises to the membrane. This Arabidopsis thaliana (Mouse-ear cress) protein is UPF0496 protein At3g28310/At3g28320.